The chain runs to 313 residues: Ribosomal RNA small subunit methyltransferase H (313 aa).

S-adenosyl-L-methionine is bound by residues 35–37 (GGH), aspartate 55, phenylalanine 79, aspartate 101, and glutamine 108.

It belongs to the methyltransferase superfamily. RsmH family.

It localises to the cytoplasm. The enzyme catalyses cytidine(1402) in 16S rRNA + S-adenosyl-L-methionine = N(4)-methylcytidine(1402) in 16S rRNA + S-adenosyl-L-homocysteine + H(+). Its function is as follows. Specifically methylates the N4 position of cytidine in position 1402 (C1402) of 16S rRNA. This is Ribosomal RNA small subunit methyltransferase H from Musicola paradisiaca (strain Ech703) (Dickeya paradisiaca).